The chain runs to 40 residues: Photosystem II reaction center protein J (40 aa).

A helical membrane pass occupies residues 8 to 28 (IPLWIIGTVAGIPVIGLIGIF).

It belongs to the PsbJ family. PSII is composed of 1 copy each of membrane proteins PsbA, PsbB, PsbC, PsbD, PsbE, PsbF, PsbH, PsbI, PsbJ, PsbK, PsbL, PsbM, PsbT, PsbX, PsbY, PsbZ, Psb30/Ycf12, at least 3 peripheral proteins of the oxygen-evolving complex and a large number of cofactors. It forms dimeric complexes.

It localises to the plastid. The protein resides in the chloroplast thylakoid membrane. One of the components of the core complex of photosystem II (PSII). PSII is a light-driven water:plastoquinone oxidoreductase that uses light energy to abstract electrons from H(2)O, generating O(2) and a proton gradient subsequently used for ATP formation. It consists of a core antenna complex that captures photons, and an electron transfer chain that converts photonic excitation into a charge separation. This chain is Photosystem II reaction center protein J, found in Pelargonium hortorum (Common geranium).